Consider the following 690-residue polypeptide: Guanylate cyclase soluble subunit alpha-1 (690 aa).

Ser266 is subject to Phosphoserine. Residues 480 to 607 form the Guanylate cyclase domain; that stretch reads TMLFSDIVGF…NNVTLANKFE (128 aa).

The protein belongs to the adenylyl cyclase class-4/guanylyl cyclase family. The active enzyme is formed by a heterodimer of an alpha and a beta subunit. Heterodimer with GUCY1B1. Mg(2+) is required as a cofactor. The cofactor is Mn(2+).

Its subcellular location is the cytoplasm. It carries out the reaction GTP = 3',5'-cyclic GMP + diphosphate. With respect to regulation, activated by nitric oxide in the presence of magnesium or manganese ions. The polypeptide is Guanylate cyclase soluble subunit alpha-1 (Gucy1a1) (Rattus norvegicus (Rat)).